The sequence spans 152 residues: UPF0266 membrane protein YobD (152 aa).

A run of 3 helical transmembrane segments spans residues leucine 6–methionine 26, valine 45–histidine 65, and alanine 67–isoleucine 87.

This sequence belongs to the UPF0266 family.

The protein resides in the cell inner membrane. This is UPF0266 membrane protein YobD from Salmonella newport (strain SL254).